Consider the following 578-residue polypeptide: MAYMCADSGNLMAIAQQVIQQQQQQQQQQQRHHHHHHLPPPPPPQSMAPHHHQQKHHHHHQQMPAMPQAPPSSHGQIPGQLAYGGGAAWPAGEHFFADAFGASAGDAVFSDLAAAADFDSDGWMESLIGDAPFQDSDLERLIFTTPPPPVPSPPPTHAAATATATAATAAPRPEAAPALLPQPAAATPVACSSPSPSSADASCSAPILQSLLSCSRAAATDPGLAAAELASVRAAATDAGDPSERLAFYFADALSRRLACGTGAPPSAEPDARFASDELTLCYKTLNDACPYSKFAHLTANQAILEATGAATKIHIVDFGIVQGIQWAALLQALATRPEGKPTRIRITGVPSPLLGPQPAASLAATNTRLRDFAKLLGVDFEFVPLLRPVHELNKSDFLVEPDEAVAVNFMLQLYHLLGDSDELVRRVLRLAKSLSPAVVTLGEYEVSLNRAGFVDRFANALSYYRSLFESLDVAMTRDSPERVRVERWMFGERIQRAVGPEEGADRTERMAGSSEWQTLMEWCGFEPVPLSNYARSQADLLLWNYDSKYKYSLVELPPAFLSLAWEKRPLLTVSAWR.

Residues 18 to 29 (VIQQQQQQQQQQ) show a composition bias toward low complexity. Disordered stretches follow at residues 18–84 (VIQQ…LAYG) and 146–173 (PPPPVPSPPPTHAAATATATAATAAPRP). Over residues 49-61 (PHHHQQKHHHHHQ) the composition is skewed to basic residues. Residues 62–74 (QMPAMPQAPPSSH) are compositionally biased toward low complexity. Pro residues predominate over residues 146-156 (PPPPVPSPPPT). The span at 157 to 173 (HAAATATATAATAAPRP) shows a compositional bias: low complexity. Positions 198–578 (SADASCSAPI…RPLLTVSAWR (381 aa)) constitute a GRAS domain. Residues 205-264 (APILQSLLSCSRAAATDPGLAAAELASVRAAATDAGDPSERLAFYFADALSRRLACGTGA) form a leucine repeat I (LRI) region. The VHIID stretch occupies residues 283 to 349 (YKTLNDACPY…GKPTRIRITG (67 aa)). Positions 314 to 318 (IHIVD) match the VHIID motif. Residues 365-397 (ATNTRLRDFAKLLGVDFEFVPLLRPVHELNKSD) form a leucine repeat II (LRII) region. Positions 406–497 (VAVNFMLQLY…RWMFGERIQR (92 aa)) are PFYRE. Residues 414–418 (LYHLL) carry the LXXLL motif motif. The segment at 500–578 (GPEEGADRTE…RPLLTVSAWR (79 aa)) is SAW.

Belongs to the GRAS family. Homodimer.

The protein localises to the nucleus. In terms of biological role, probable transcription factor involved in plant development. Involved in environmental abiotic stress resistance. May increase the expression of stress-responsive genes. Binds DNA in vitro. This is SCARECROW-LIKE protein 7 from Oryza sativa subsp. japonica (Rice).